The chain runs to 309 residues: Homoserine kinase (309 aa).

91–101 (PIGSGLGSSAC) serves as a coordination point for ATP.

This sequence belongs to the GHMP kinase family. Homoserine kinase subfamily.

Its subcellular location is the cytoplasm. The enzyme catalyses L-homoserine + ATP = O-phospho-L-homoserine + ADP + H(+). It participates in amino-acid biosynthesis; L-threonine biosynthesis; L-threonine from L-aspartate: step 4/5. Catalyzes the ATP-dependent phosphorylation of L-homoserine to L-homoserine phosphate. This chain is Homoserine kinase, found in Citrobacter koseri (strain ATCC BAA-895 / CDC 4225-83 / SGSC4696).